The chain runs to 865 residues: Alanine--tRNA ligase (865 aa).

Residues His554, His558, Cys656, and His660 each contribute to the Zn(2+) site.

Belongs to the class-II aminoacyl-tRNA synthetase family. Requires Zn(2+) as cofactor.

The protein localises to the cytoplasm. It carries out the reaction tRNA(Ala) + L-alanine + ATP = L-alanyl-tRNA(Ala) + AMP + diphosphate. In terms of biological role, catalyzes the attachment of alanine to tRNA(Ala) in a two-step reaction: alanine is first activated by ATP to form Ala-AMP and then transferred to the acceptor end of tRNA(Ala). Also edits incorrectly charged Ser-tRNA(Ala) and Gly-tRNA(Ala) via its editing domain. The protein is Alanine--tRNA ligase of Francisella philomiragia subsp. philomiragia (strain ATCC 25017 / CCUG 19701 / FSC 153 / O#319-036).